The primary structure comprises 823 residues: Nuclear pore complex protein Nup93-1 (823 aa).

Belongs to the nucleoporin interacting component (NIC) family. As to quaternary structure, part of the nuclear pore complex (NPC). Interacts with msk (via C-terminus); this association might be facilitated by Nup75. Interacts with Mad (preferentially when phosphorylated). Interacts with Nup154 (via N-terminus). Interacts with the Polycomb group (PcG) proteins Pc and E(z).

It is found in the nucleus membrane. The protein localises to the nucleus. The protein resides in the nuclear pore complex. Its subcellular location is the nucleoplasm. Functionally, required for nuclear pore complex assembly, maintenance and function. Required for nuclear import of phosphorylated Mad via importin msk. Has no role in classical nuclear localization signal (cNLS)-dependent nuclear import via importin-beta. Mediates the association between the nuclear pore complex and a subclass of silenced regions bound by Polycomb group (PcG) proteins, enables long-range interactions between Polycomb loci and contributes to repression of polycomb targets. Together with Nup62 and Nup154, contributes to karyosome morphology and chromatin organization including attachment to the nuclear envelope in oocytes and nurse cells. In Drosophila melanogaster (Fruit fly), this protein is Nuclear pore complex protein Nup93-1.